Consider the following 128-residue polypeptide: LFSFKELNEQFKRKIKVVLPVDLVLIIAASFACYCTNMENTYGLEVVGHIPRGIPPPRAPPMNILSAVITEAFGVALVGYAASLALAQGSAKKFKYSVDDNQEFLAHGLSNVISSFLFCIPSAAAMGR.

At 1-14 the chain is on the extracellular side; that stretch reads LFSFKELNEQFKRK. A helical transmembrane segment spans residues 15–35; it reads IKVVLPVDLVLIIAASFACYC. Topologically, residues 36-66 are cytoplasmic; sequence TNMENTYGLEVVGHIPRGIPPPRAPPMNILS. The helical transmembrane segment at 67-87 threads the bilayer; it reads AVITEAFGVALVGYAASLALA. Residues 88-103 lie on the Extracellular side of the membrane; that stretch reads QGSAKKFKYSVDDNQE. Residues 104 to 124 traverse the membrane as a helical segment; it reads FLAHGLSNVISSFLFCIPSAA. Topologically, residues 125 to 128 are cytoplasmic; that stretch reads AMGR.

It belongs to the SLC26A/SulP transporter (TC 2.A.53) family. As to expression, expressed in gastric epithelium, predominantly in the gastric parietal cells but also at lower levels in mucosal cells.

Its subcellular location is the basolateral cell membrane. The protein resides in the recycling endosome membrane. It localises to the apical cell membrane. The protein localises to the lateral cell membrane. It carries out the reaction chloride(in) = chloride(out). It catalyses the reaction iodide(out) = iodide(in). The catalysed reaction is bromide(in) = bromide(out). The enzyme catalyses oxalate(in) = oxalate(out). It carries out the reaction nitrate(in) = nitrate(out). It catalyses the reaction sulfate(in) = sulfate(out). The catalysed reaction is D-gluconate(in) = D-gluconate(out). The enzyme catalyses thiocyanate(in) = thiocyanate(out). It carries out the reaction hydrogencarbonate(in) = hydrogencarbonate(out). It catalyses the reaction hydrogencarbonate(in) + chloride(out) = hydrogencarbonate(out) + chloride(in). In terms of biological role, acts as an anion channel mediating the transport of chloride, bromide, iodide, nitrate, sulfate, gluconate, thiocyanate, oxalate and bicarbonate ions. Its permeability towards bicarbonate is weak and increases when pH is above 7. Mediates thiocyanate transport in retinal pigment epithelium cells. Mediates iodide transport in the thyroid gland, playing an important role in the synthesis of thyroid hormones and the maintenance of thyroid function. The chain is Anion exchange transporter from Oryctolagus cuniculus (Rabbit).